A 557-amino-acid chain; its full sequence is Glucose-6-phosphate isomerase (557 aa).

Catalysis depends on Glu361, which acts as the Proton donor. Residues His392 and Lys520 contribute to the active site.

The protein belongs to the GPI family.

Its subcellular location is the cytoplasm. It carries out the reaction alpha-D-glucose 6-phosphate = beta-D-fructose 6-phosphate. It participates in carbohydrate biosynthesis; gluconeogenesis. Its pathway is carbohydrate degradation; glycolysis; D-glyceraldehyde 3-phosphate and glycerone phosphate from D-glucose: step 2/4. Catalyzes the reversible isomerization of glucose-6-phosphate to fructose-6-phosphate. This is Glucose-6-phosphate isomerase from Acinetobacter baylyi (strain ATCC 33305 / BD413 / ADP1).